Consider the following 227-residue polypeptide: 27 kDa A-type inclusion protein (227 aa).

Residues 4–210 (MPKQREMRRL…AECRRGNNGS (207 aa)) adopt a coiled-coil conformation.

This chain is 27 kDa A-type inclusion protein, found in Bos taurus (Bovine).